A 92-amino-acid chain; its full sequence is Small ribosomal subunit protein uS19 (92 aa).

Belongs to the universal ribosomal protein uS19 family.

In terms of biological role, protein S19 forms a complex with S13 that binds strongly to the 16S ribosomal RNA. This chain is Small ribosomal subunit protein uS19, found in Mesorhizobium japonicum (strain LMG 29417 / CECT 9101 / MAFF 303099) (Mesorhizobium loti (strain MAFF 303099)).